The chain runs to 119 residues: Toxin ICK-11 (119 aa).

The signal sequence occupies residues 1 to 19 (MMKLYSLVIIATLAAAAFA). Intrachain disulfides connect Cys59–Cys74, Cys67–Cys80, Cys71–Cys116, and Cys73–Cys87.

This sequence belongs to the neurotoxin 25 family. ICK-8 subfamily. Expressed by the venom gland.

It is found in the secreted. In terms of biological role, ion channel inhibitor. In Trittame loki (Brush-footed trapdoor spider), this protein is Toxin ICK-11.